The primary structure comprises 229 residues: Uridylate kinase (229 aa).

Residue 11–12 (GS) participates in ATP binding. UMP is bound at residue Gly45. 2 residues coordinate ATP: Gly46 and Arg50. UMP-binding positions include Asp67 and 114–120 (TEPGHTT). 3 residues coordinate ATP: Thr140, Tyr146, and Asp149.

Belongs to the UMP kinase family. Homohexamer.

It localises to the cytoplasm. It carries out the reaction UMP + ATP = UDP + ADP. It participates in pyrimidine metabolism; CTP biosynthesis via de novo pathway; UDP from UMP (UMPK route): step 1/1. Inhibited by UTP. Catalyzes the reversible phosphorylation of UMP to UDP. The polypeptide is Uridylate kinase (Thermoplasma acidophilum (strain ATCC 25905 / DSM 1728 / JCM 9062 / NBRC 15155 / AMRC-C165)).